A 425-amino-acid polypeptide reads, in one-letter code: Kynureninase (425 aa).

Pyridoxal 5'-phosphate contacts are provided by residues L105, T106, 133 to 136 (FPSD), D218, H221, and Y243. The residue at position 244 (K244) is an N6-(pyridoxal phosphate)lysine. Positions 274 and 302 each coordinate pyridoxal 5'-phosphate.

The protein belongs to the kynureninase family. Homodimer. Pyridoxal 5'-phosphate is required as a cofactor.

The catalysed reaction is L-kynurenine + H2O = anthranilate + L-alanine + H(+). It carries out the reaction 3-hydroxy-L-kynurenine + H2O = 3-hydroxyanthranilate + L-alanine + H(+). The protein operates within amino-acid degradation; L-kynurenine degradation; L-alanine and anthranilate from L-kynurenine: step 1/1. It functions in the pathway cofactor biosynthesis; NAD(+) biosynthesis; quinolinate from L-kynurenine: step 2/3. Functionally, catalyzes the cleavage of L-kynurenine (L-Kyn) and L-3-hydroxykynurenine (L-3OHKyn) into anthranilic acid (AA) and 3-hydroxyanthranilic acid (3-OHAA), respectively. The polypeptide is Kynureninase (Christiangramia forsetii (strain DSM 17595 / CGMCC 1.15422 / KT0803) (Gramella forsetii)).